Here is a 356-residue protein sequence, read N- to C-terminus: Cyclin-D2-2 (356 aa).

Residues 325–343 show a composition bias toward polar residues; that stretch reads LGSSQSNSNNKDYNSQDSA. Residues 325–356 are disordered; the sequence is LGSSQSNSNNKDYNSQDSAPASKRRRLNTTPI. The segment covering 346–356 has biased composition (basic residues); that stretch reads SKRRRLNTTPI.

Belongs to the cyclin family. Cyclin D subfamily.

The protein is Cyclin-D2-2 (CYCD2-2) of Oryza sativa subsp. japonica (Rice).